A 706-amino-acid polypeptide reads, in one-letter code: MEHVVDVEFGGKMVTISTGKMAKQANGAVVVKSGDTMVLVTAVAQKEAKEGQDFFPLTVNYTEKAYAGGKIPGSFFRREARPSDPETLTCRLIDRPIRPLFPENFLNDTQIIATVVSADKDHDPRILSMLGASAALEVSDIPFQGPIAGVKVGRVDGRLICNPTADELELSDMEIVVAASRDAIIMVEGEARFVSEDDMLDAIFFGHAAVQPVLEAQEKLKQLAGVAKRDVPPPVVDQALLARVRELASERMSAAVKIKSKQERHNQIDLITAETTASLAAEFEGNEKQIRAFLGDLEYECVRADVLNSGVRIDGRDTVTIRPIATEAGLLPRTHGSALFTRGETQALVVTTLGTSSDEQRMDSLYGEYRKRFLLHYNFPPFSVGETSFRLGPGRREIGHGMLAERALSAILPKHDDFPYTIRIVSETLESNGSSSMAAVCGGCMSLMDAGVPISAPVAGIAMGLIKEGEKVAILSDILGDEDHLGDMDFKVAGSSDGITALQMDIKIGGVTREIMQKALAQAREGRLHILGKMAETLGAPRPEMSSFAPRITTIWVKTDKIRDVIGTGGKNIRNITETTGVTVDIEDTGRINIASTSKEACDLAIQMIRGLTDEAEEGKLYMGIVKKIMDFGAFVEILPGTDGLVHISELDTKRVKTVTEVLNEGDRVLVKCIGVDKNGKVKLSRKEALGLNPDGTPATDAPAGE.

Mg(2+)-binding residues include aspartate 483 and aspartate 489. Residues 550 to 609 enclose the KH domain; sequence PRITTIWVKTDKIRDVIGTGGKNIRNITETTGVTVDIEDTGRINIASTSKEACDLAIQMI. Positions 619–687 constitute an S1 motif domain; sequence GKLYMGIVKK…KNGKVKLSRK (69 aa).

This sequence belongs to the polyribonucleotide nucleotidyltransferase family. Mg(2+) serves as cofactor.

The protein resides in the cytoplasm. It carries out the reaction RNA(n+1) + phosphate = RNA(n) + a ribonucleoside 5'-diphosphate. In terms of biological role, involved in mRNA degradation. Catalyzes the phosphorolysis of single-stranded polyribonucleotides processively in the 3'- to 5'-direction. The chain is Polyribonucleotide nucleotidyltransferase from Pelobacter propionicus (strain DSM 2379 / NBRC 103807 / OttBd1).